The following is a 350-amino-acid chain: Type II restriction enzyme NgoBI (350 aa).

The catalysed reaction is Endonucleolytic cleavage of DNA to give specific double-stranded fragments with terminal 5'-phosphates.. Its function is as follows. A P subtype restriction enzyme that recognizes the double-stranded sequence 5'-RGCGCY-3'; the cleavage site is unknown. This chain is Type II restriction enzyme NgoBI (ngoBIR), found in Neisseria gonorrhoeae.